Here is a 235-residue protein sequence, read N- to C-terminus: Biosynthetic peptidoglycan transglycosylase (235 aa).

The chain crosses the membrane as a helical span at residues 12 to 34; it reads GLGKLLLAALLSTIVSVALLRFI.

This sequence belongs to the glycosyltransferase 51 family.

The protein localises to the cell inner membrane. The catalysed reaction is [GlcNAc-(1-&gt;4)-Mur2Ac(oyl-L-Ala-gamma-D-Glu-L-Lys-D-Ala-D-Ala)](n)-di-trans,octa-cis-undecaprenyl diphosphate + beta-D-GlcNAc-(1-&gt;4)-Mur2Ac(oyl-L-Ala-gamma-D-Glu-L-Lys-D-Ala-D-Ala)-di-trans,octa-cis-undecaprenyl diphosphate = [GlcNAc-(1-&gt;4)-Mur2Ac(oyl-L-Ala-gamma-D-Glu-L-Lys-D-Ala-D-Ala)](n+1)-di-trans,octa-cis-undecaprenyl diphosphate + di-trans,octa-cis-undecaprenyl diphosphate + H(+). Its pathway is cell wall biogenesis; peptidoglycan biosynthesis. In terms of biological role, peptidoglycan polymerase that catalyzes glycan chain elongation from lipid-linked precursors. In Aeromonas hydrophila subsp. hydrophila (strain ATCC 7966 / DSM 30187 / BCRC 13018 / CCUG 14551 / JCM 1027 / KCTC 2358 / NCIMB 9240 / NCTC 8049), this protein is Biosynthetic peptidoglycan transglycosylase.